A 72-amino-acid polypeptide reads, in one-letter code: Translation initiation factor IF-1 1 (72 aa).

In terms of domain architecture, S1-like spans 1-72 (MAKDDVIQMQ…SRARIVFRAK (72 aa)).

The protein belongs to the IF-1 family. In terms of assembly, component of the 30S ribosomal translation pre-initiation complex which assembles on the 30S ribosome in the order IF-2 and IF-3, IF-1 and N-formylmethionyl-tRNA(fMet); mRNA recruitment can occur at any time during PIC assembly.

It localises to the cytoplasm. In terms of biological role, one of the essential components for the initiation of protein synthesis. Stabilizes the binding of IF-2 and IF-3 on the 30S subunit to which N-formylmethionyl-tRNA(fMet) subsequently binds. Helps modulate mRNA selection, yielding the 30S pre-initiation complex (PIC). Upon addition of the 50S ribosomal subunit IF-1, IF-2 and IF-3 are released leaving the mature 70S translation initiation complex. The polypeptide is Translation initiation factor IF-1 1 (Ralstonia nicotianae (strain ATCC BAA-1114 / GMI1000) (Ralstonia solanacearum)).